Reading from the N-terminus, the 250-residue chain is Cytochrome c oxidase subunit 2 (250 aa).

The Mitochondrial intermembrane portion of the chain corresponds to 1–39 (MFFLINKLVMNFDAPSPWGIYFQDSATPQMEGLNELHDN). A helical transmembrane segment spans residues 40-60 (IMYYLVVILFAVGWILLSIVI). Over 61–81 (NYVSTKSPISHKYLNHGTLIE) the chain is Mitochondrial matrix. A helical membrane pass occupies residues 82–104 (LIWTITPAVILILIAFPSFKLLY). Topologically, residues 105–250 (LMDEVSDPSM…EKFLIWLKEQ (146 aa)) are mitochondrial intermembrane. 6 residues coordinate Cu cation: histidine 185, cysteine 220, glutamate 222, cysteine 224, histidine 228, and methionine 231. Glutamate 222 serves as a coordination point for Mg(2+).

Belongs to the cytochrome c oxidase subunit 2 family. In terms of assembly, component of the cytochrome c oxidase (complex IV, CIV), a multisubunit enzyme composed of a catalytic core of 3 subunits and several supernumerary subunits. The complex exists as a monomer or a dimer and forms supercomplexes (SCs) in the inner mitochondrial membrane with ubiquinol-cytochrome c oxidoreductase (cytochrome b-c1 complex, complex III, CIII). Requires Cu cation as cofactor.

The protein resides in the mitochondrion inner membrane. The catalysed reaction is 4 Fe(II)-[cytochrome c] + O2 + 8 H(+)(in) = 4 Fe(III)-[cytochrome c] + 2 H2O + 4 H(+)(out). Functionally, component of the cytochrome c oxidase, the last enzyme in the mitochondrial electron transport chain which drives oxidative phosphorylation. The respiratory chain contains 3 multisubunit complexes succinate dehydrogenase (complex II, CII), ubiquinol-cytochrome c oxidoreductase (cytochrome b-c1 complex, complex III, CIII) and cytochrome c oxidase (complex IV, CIV), that cooperate to transfer electrons derived from NADH and succinate to molecular oxygen, creating an electrochemical gradient over the inner membrane that drives transmembrane transport and the ATP synthase. Cytochrome c oxidase is the component of the respiratory chain that catalyzes the reduction of oxygen to water. Electrons originating from reduced cytochrome c in the intermembrane space (IMS) are transferred via the dinuclear copper A center (CU(A)) of subunit 2 and heme A of subunit 1 to the active site in subunit 1, a binuclear center (BNC) formed by heme A3 and copper B (CU(B)). The BNC reduces molecular oxygen to 2 water molecules using 4 electrons from cytochrome c in the IMS and 4 protons from the mitochondrial matrix. The polypeptide is Cytochrome c oxidase subunit 2 (COII) (Podospora anserina (strain S / ATCC MYA-4624 / DSM 980 / FGSC 10383) (Pleurage anserina)).